A 121-amino-acid polypeptide reads, in one-letter code: Cu-Zn superoxide dismutase-like protein (121 aa).

Cys48 and Cys98 are joined by a disulfide.

The protein belongs to the Cu-Zn superoxide dismutase family.

It localises to the host cytoplasm. In terms of biological role, virion protein with no enzymatic activity. The chain is Cu-Zn superoxide dismutase-like protein from Vaccinia virus (strain Ankara) (VACV).